We begin with the raw amino-acid sequence, 595 residues long: Actin-histidine N-methyltransferase (595 aa).

The disordered stretch occupies residues 1-22; sequence MGKKSRVKTQKSGTGATATVSP. A compositionally biased stretch (polar residues) spans 10 to 20; that stretch reads QKSGTGATATV. S-adenosyl-L-methionine-binding positions include arginine 75, 104-106, arginine 254, 275-279, and 325-327; these read EGF, DMCNH, and SGF. An SET domain is found at 94–314; the sequence is EGFEMVNFKE…AGEQIYIFYG (221 aa). Serine 513 is subject to Phosphoserine. A compositionally biased stretch (polar residues) spans 549 to 563; the sequence is ENGLVNGENSIPNGT. Residues 549-595 form a disordered region; the sequence is ENGLVNGENSIPNGTRSEDENLNQEESKRAVEDAKGSSSDRADAVKE. Positions 573-595 are enriched in basic and acidic residues; the sequence is EESKRAVEDAKGSSSDRADAVKE.

This sequence belongs to the class V-like SAM-binding methyltransferase superfamily. SETD3 actin-histidine methyltransferase family. Interacts with MYOD1. Post-translationally, phosphorylated by GSK3B, which is required for recognition by the SCF(FBXW7) complex and subsequent degradation. Ubiquitinated by the SCF(FBXW7) complex following phosphorylation by GSK3B, leading to its degradation by the proteasome.

Its subcellular location is the cytoplasm. It is found in the nucleus. It catalyses the reaction L-histidyl-[protein] + S-adenosyl-L-methionine = N(tele)-methyl-L-histidyl-[protein] + S-adenosyl-L-homocysteine + H(+). Functionally, protein-histidine N-methyltransferase that specifically mediates 3-methylhistidine (tele-methylhistidine) methylation of actin at 'His-73'. Histidine methylation of actin is required for smooth muscle contraction of the laboring uterus during delivery. Does not have protein-lysine N-methyltransferase activity and probably only catalyzes histidine methylation of actin. In Callithrix jacchus (White-tufted-ear marmoset), this protein is Actin-histidine N-methyltransferase.